A 327-amino-acid chain; its full sequence is MLWIWAVLPLVLAGSQLRVHTQGTNSISESLKLRRRVRETDKNCSEGLYQGGPFCCQPCQPGKKKVEDCKMNGGTPTCAPCTEGKEYMDKNHYADKCRRCTLCDEEHGLEVETNCTLTQNTKCKCKPDFYCDSPGCEHCVRCASCEHGTLEPCTATSNTNCRKQSPRNRLWLLTILVLLIPLVFIYRKYRKRKCWKRRQDDPESRTSSRETIPMNASNLSLSKYIPRIAEDMTIQEAKKFARENNIKEGKIDEIMHDSIQDTAEQKVQLLLCWYQSHGKSDAYQDLIKGLKKAECRRTLDKFQDMVQKDLGKSTPDTGNENEGQCLE.

Positions 1 to 21 (MLWIWAVLPLVLAGSQLRVHT) are cleaved as a signal peptide. Over 22–169 (QGTNSISESL…NCRKQSPRNR (148 aa)) the chain is Extracellular. Asparagine 43 carries an N-linked (GlcNAc...) asparagine glycan. 3 TNFR-Cys repeats span residues 43–79 (NCSEGLYQGGPFCCQPCQPGKKKVEDCKMNGGTPTCA), 80–123 (PCTE…NTKC), and 124–162 (KCKPDFYCDSPGCEHCVRCASCEHGTLEPCTATSNTNCR). 9 disulfide bridges follow: cysteine 44–cysteine 55, cysteine 56–cysteine 69, cysteine 59–cysteine 78, cysteine 81–cysteine 97, cysteine 100–cysteine 115, cysteine 103–cysteine 123, cysteine 125–cysteine 139, cysteine 142–cysteine 153, and cysteine 145–cysteine 161. N-linked (GlcNAc...) asparagine glycosylation occurs at asparagine 114. A helical membrane pass occupies residues 170–186 (LWLLTILVLLIPLVFIY). Topologically, residues 187-327 (RKYRKRKCWK…GNENEGQCLE (141 aa)) are cytoplasmic. The S-palmitoyl cysteine moiety is linked to residue cysteine 194. The interaction with HIPK3 stretch occupies residues 204–309 (SRTSSRETIP…DKFQDMVQKD (106 aa)). Residue threonine 206 is modified to Phosphothreonine. 2 positions are modified to phosphoserine: serine 217 and serine 220. Positions 222-246 (SKYIPRIAEDMTIQEAKKFARENNI) are interaction with CALM. In terms of domain architecture, Death spans 222-306 (SKYIPRIAED…RTLDKFQDMV (85 aa)). A disordered region spans residues 308-327 (KDLGKSTPDTGNENEGQCLE). Threonine 314 carries the phosphothreonine modification. The span at 314–327 (TPDTGNENEGQCLE) shows a compositional bias: polar residues.

Component of the death-induced signaling complex (DISC) composed of cell surface receptor FAS/CD95, adapter protein FADD and the CASP8 protease; recruitment of CASP8 to the complex is required for processing of CASP8 into the p18 and p10 subunits. Interacts directly (via DED domain) with NOL3 (via CARD domain); inhibits death-inducing signaling complex (DISC) assembly by inhibiting the increase in FAS-FADD binding induced by FAS activation. Binds DAXX. Interacts with HIPK3. Part of a complex containing HIPK3 and FADD. Binds RIPK1 and FAIM2. Interacts with BABAM2 and FEM1B. Interacts with CALM. In the absence of stimulation, interacts with BIRC2, DDX3X and GSK3B. The interaction with BIRC2 and DDX3X is further enhanced upon receptor stimulation and accompanied by DDX3X and BIRC2 cleavage. Post-translationally, palmitoylated. Palmitoylation by ZDHHC7 prevents the lysosomal degradation of FAS regulating its expression at the plasma membrane. Detected in various tissues including thymus, liver, lung, heart, and adult ovary.

It localises to the cell membrane. The protein localises to the membrane raft. Functionally, receptor for TNFSF6/FASLG. The adapter molecule FADD recruits caspase CASP8 to the activated receptor. The resulting death-inducing signaling complex (DISC) performs CASP8 proteolytic activation which initiates the subsequent cascade of caspases (aspartate-specific cysteine proteases) mediating apoptosis. FAS-mediated apoptosis may have a role in the induction of peripheral tolerance, in the antigen-stimulated suicide of mature T-cells, or both. The chain is Tumor necrosis factor receptor superfamily member 6 (Fas) from Mus musculus (Mouse).